Reading from the N-terminus, the 363-residue chain is 3-dehydroquinate synthase (363 aa).

NAD(+) is bound by residues 134–135 (TT), K147, K156, and 174–177 (TLKT). Zn(2+)-binding residues include E189, H254, and H271.

Belongs to the sugar phosphate cyclases superfamily. Dehydroquinate synthase family. It depends on Co(2+) as a cofactor. Requires Zn(2+) as cofactor. NAD(+) serves as cofactor.

The protein localises to the cytoplasm. It catalyses the reaction 7-phospho-2-dehydro-3-deoxy-D-arabino-heptonate = 3-dehydroquinate + phosphate. It participates in metabolic intermediate biosynthesis; chorismate biosynthesis; chorismate from D-erythrose 4-phosphate and phosphoenolpyruvate: step 2/7. Its function is as follows. Catalyzes the conversion of 3-deoxy-D-arabino-heptulosonate 7-phosphate (DAHP) to dehydroquinate (DHQ). This is 3-dehydroquinate synthase from Prochlorococcus marinus (strain MIT 9515).